The chain runs to 371 residues: Methionine import ATP-binding protein MetN (371 aa).

Residues 29 to 270 (IRIEGVRKVY…PRHEVTRRFV (242 aa)) enclose the ABC transporter domain. 67–74 (GRSGAGKS) lines the ATP pocket.

It belongs to the ABC transporter superfamily. Methionine importer (TC 3.A.1.24) family. The complex is composed of two ATP-binding proteins (MetN), two transmembrane proteins (MetI) and a solute-binding protein (MetQ).

It is found in the cell inner membrane. The enzyme catalyses L-methionine(out) + ATP + H2O = L-methionine(in) + ADP + phosphate + H(+). The catalysed reaction is D-methionine(out) + ATP + H2O = D-methionine(in) + ADP + phosphate + H(+). In terms of biological role, part of the ABC transporter complex MetNIQ involved in methionine import. Responsible for energy coupling to the transport system. The chain is Methionine import ATP-binding protein MetN from Rhodopseudomonas palustris (strain BisA53).